The primary structure comprises 427 residues: Enolase (427 aa).

Gln-163 serves as a coordination point for (2R)-2-phosphoglycerate. The active-site Proton donor is the Glu-205. Asp-242, Glu-288, and Asp-315 together coordinate Mg(2+). Residues Lys-340, Arg-369, Ser-370, and Lys-391 each contribute to the (2R)-2-phosphoglycerate site. Lys-340 serves as the catalytic Proton acceptor.

It belongs to the enolase family. Mg(2+) is required as a cofactor.

It is found in the cytoplasm. The protein resides in the secreted. The protein localises to the cell surface. It carries out the reaction (2R)-2-phosphoglycerate = phosphoenolpyruvate + H2O. Its pathway is carbohydrate degradation; glycolysis; pyruvate from D-glyceraldehyde 3-phosphate: step 4/5. Its function is as follows. Catalyzes the reversible conversion of 2-phosphoglycerate (2-PG) into phosphoenolpyruvate (PEP). It is essential for the degradation of carbohydrates via glycolysis. This Cytophaga hutchinsonii (strain ATCC 33406 / DSM 1761 / CIP 103989 / NBRC 15051 / NCIMB 9469 / D465) protein is Enolase.